The primary structure comprises 448 residues: Tubulin alpha-5 chain (448 aa).

The short motif at 1–4 (MREC) is the MREC motif element. Gln-11 contacts GTP. An N6-acetyllysine modification is found at Lys-40. GTP is bound by residues Glu-71, Ser-140, Gly-144, Thr-145, Thr-179, Asn-206, and Asn-228. Glu-71 lines the Mg(2+) pocket. Residue Glu-254 is part of the active site.

This sequence belongs to the tubulin family. In terms of assembly, dimer of alpha and beta chains. A typical microtubule is a hollow water-filled tube with an outer diameter of 25 nm and an inner diameter of 15 nM. Alpha-beta heterodimers associate head-to-tail to form protofilaments running lengthwise along the microtubule wall with the beta-tubulin subunit facing the microtubule plus end conferring a structural polarity. Microtubules usually have 13 protofilaments but different protofilament numbers can be found in some organisms and specialized cells. Requires Mg(2+) as cofactor. Post-translationally, some glutamate residues at the C-terminus are polyglycylated, resulting in polyglycine chains on the gamma-carboxyl group. Glycylation is mainly limited to tubulin incorporated into axonemes (cilia and flagella) whereas glutamylation is prevalent in neuronal cells, centrioles, axonemes, and the mitotic spindle. Both modifications can coexist on the same protein on adjacent residues, and lowering polyglycylation levels increases polyglutamylation, and reciprocally. The precise function of polyglycylation is still unclear. Some glutamate residues at the C-terminus are polyglutamylated, resulting in polyglutamate chains on the gamma-carboxyl group. Polyglutamylation plays a key role in microtubule severing by spastin (SPAST). SPAST preferentially recognizes and acts on microtubules decorated with short polyglutamate tails: severing activity by SPAST increases as the number of glutamates per tubulin rises from one to eight, but decreases beyond this glutamylation threshold. In terms of processing, acetylation of alpha chains at Lys-40 is located inside the microtubule lumen. This modification has been correlated with increased microtubule stability, intracellular transport and ciliary assembly.

The protein resides in the cytoplasm. It is found in the cytoskeleton. The catalysed reaction is GTP + H2O = GDP + phosphate + H(+). In terms of biological role, tubulin is the major constituent of microtubules, a cylinder consisting of laterally associated linear protofilaments composed of alpha- and beta-tubulin heterodimers. Microtubules grow by the addition of GTP-tubulin dimers to the microtubule end, where a stabilizing cap forms. Below the cap, tubulin dimers are in GDP-bound state, owing to GTPase activity of alpha-tubulin. This Gallus gallus (Chicken) protein is Tubulin alpha-5 chain.